A 283-amino-acid polypeptide reads, in one-letter code: Probable protein phosphatase 2C 58 (283 aa).

In terms of domain architecture, PPM-type phosphatase spans Thr35 to Phe282. Mn(2+) contacts are provided by Asp72, Gly73, Asp234, and Asp273.

This sequence belongs to the PP2C family. Mg(2+) serves as cofactor. The cofactor is Mn(2+).

The enzyme catalyses O-phospho-L-seryl-[protein] + H2O = L-seryl-[protein] + phosphate. It catalyses the reaction O-phospho-L-threonyl-[protein] + H2O = L-threonyl-[protein] + phosphate. This Arabidopsis thaliana (Mouse-ear cress) protein is Probable protein phosphatase 2C 58.